The chain runs to 98 residues: Large ribosomal subunit protein uL23 (98 aa).

This sequence belongs to the universal ribosomal protein uL23 family. As to quaternary structure, part of the 50S ribosomal subunit. Contacts protein L29, and trigger factor when it is bound to the ribosome.

In terms of biological role, one of the early assembly proteins it binds 23S rRNA. One of the proteins that surrounds the polypeptide exit tunnel on the outside of the ribosome. Forms the main docking site for trigger factor binding to the ribosome. The protein is Large ribosomal subunit protein uL23 of Frankia alni (strain DSM 45986 / CECT 9034 / ACN14a).